The primary structure comprises 117 residues: NADH-ubiquinone oxidoreductase chain 3 (117 aa).

The next 3 membrane-spanning stretches (helical) occupy residues Ile4–Ile24, Ile60–Ile80, and Ile86–His106.

The protein belongs to the complex I subunit 3 family.

It is found in the mitochondrion membrane. The enzyme catalyses a ubiquinone + NADH + 5 H(+)(in) = a ubiquinol + NAD(+) + 4 H(+)(out). Core subunit of the mitochondrial membrane respiratory chain NADH dehydrogenase (Complex I) that is believed to belong to the minimal assembly required for catalysis. Complex I functions in the transfer of electrons from NADH to the respiratory chain. The immediate electron acceptor for the enzyme is believed to be ubiquinone. The protein is NADH-ubiquinone oxidoreductase chain 3 (mt:ND3) of Drosophila yakuba (Fruit fly).